We begin with the raw amino-acid sequence, 547 residues long: Chaperonin GroEL 2 (547 aa).

ATP-binding positions include Thr-29 to Pro-32, Asp-86 to Thr-90, Gly-418, Asn-482 to Ala-484, and Asp-498.

It belongs to the chaperonin (HSP60) family. Forms a cylinder of 14 subunits composed of two heptameric rings stacked back-to-back. Interacts with the co-chaperonin GroES.

The protein resides in the cytoplasm. It catalyses the reaction ATP + H2O + a folded polypeptide = ADP + phosphate + an unfolded polypeptide.. In terms of biological role, together with its co-chaperonin GroES, plays an essential role in assisting protein folding. The GroEL-GroES system forms a nano-cage that allows encapsulation of the non-native substrate proteins and provides a physical environment optimized to promote and accelerate protein folding. This Corynebacterium efficiens (strain DSM 44549 / YS-314 / AJ 12310 / JCM 11189 / NBRC 100395) protein is Chaperonin GroEL 2.